Consider the following 417-residue polypeptide: Phosphoglycerate kinase 1 (417 aa).

Serine 2 carries the N-acetylserine modification. Residues serine 2 and serine 4 each carry the phosphoserine modification. Lysine 6 bears the N6-succinyllysine mark. Lysine 11 carries the post-translational modification N6-acetyllysine. (2R)-3-phosphoglycerate-binding residues include valine 23, aspartate 24, phenylalanine 25, asparagine 26, glutamine 38, and arginine 39. The segment at 38–43 (QRIKAA) is mitochondrial targeting region exposed following cis-trans isomerization by PIN1 and recognized by the TOM complex for mitochondrial translocation of the protein. Position 48 is an N6-acetyllysine; alternate (lysine 48). Lysine 48 carries the N6-succinyllysine; alternate modification. Positions 62, 63, 65, and 66 each coordinate (2R)-3-phosphoglycerate. Position 75 is an N6-acetyllysine (lysine 75). At tyrosine 76 the chain carries Phosphotyrosine. An N6-acetyllysine mark is found at lysine 86 and lysine 91. Lysine 97 carries the N6-acetyllysine; alternate modification. Lysine 97 is modified (N6-(2-hydroxyisobutyryl)lysine; alternate). 2 residues coordinate (2R)-3-phosphoglycerate: leucine 122 and arginine 123. Lysine 131 is modified (N6-acetyllysine; alternate). Lysine 131 is modified (N6-malonyllysine; alternate). The residue at position 146 (lysine 146) is an N6-acetyllysine. Positions 170 and 171 each coordinate (2R)-3-phosphoglycerate. N6-succinyllysine is present on lysine 191. Tyrosine 196 bears the Phosphotyrosine mark. Residue lysine 199 is modified to N6-acetyllysine. Serine 203 carries the phosphoserine; by MAPK1 modification. Residue glycine 214 coordinates ADP. Residue glycine 214 coordinates CDP. 2 residues coordinate AMP: alanine 215 and lysine 216. Alanine 215 is a binding site for ATP. Position 215 (alanine 215) interacts with Mg(2+). Lysine 216 carries the N6-(2-hydroxyisobutyryl)lysine modification. Mg(2+) contacts are provided by alanine 218 and aspartate 219. Aspartate 219 lines the CDP pocket. Lysine 220 provides a ligand contact to AMP. Lysine 220 contacts ATP. At lysine 220 the chain carries N6-(2-hydroxyisobutyryl)lysine. Glycine 238 serves as a coordination point for ADP. Glycine 238 serves as a coordination point for CDP. Glycine 239 is an AMP binding site. Glycine 239 contributes to the ATP binding site. N6-acetyllysine is present on residues lysine 267 and lysine 291. Residue glycine 313 coordinates AMP. Residue glycine 313 participates in ATP binding. Lysine 323 bears the N6-(2-hydroxyisobutyryl)lysine mark. The CDP site is built by glycine 338, valine 340, and phenylalanine 343. Residue phenylalanine 343 coordinates ADP. Glutamate 344 serves as a coordination point for AMP. Position 344 (glutamate 344) interacts with ATP. N6-acetyllysine is present on lysine 361. Residues aspartate 375 and threonine 376 each coordinate ATP. Mg(2+) is bound at residue aspartate 375.

It belongs to the phosphoglycerate kinase family. Monomer. Interacts with kinase MAPK1/ERK2; the interaction is direct, occurs under hypoxic conditions, and promotes its interaction with PIN1. Interacts with peptidyl-prolyl cis-trans isomerase PIN1; the interaction is direct, occurs under hypoxic conditions, and targets the protein to the mitochondrion by promoting interactions with the TOM complex. Interacts with mitochondrial circRNA mcPGK1 (via its 2nd stem-loop); the interaction is direct and targets the protein to the mitochondrion by promoting interactions with the TOM complex. Interacts with pyruvate dehydrogenase kinase PDK1; the interaction is direct, occurs under hypoxic conditions and leads to PDK1-mediated inhibition of pyruvate dehydrogenase complex activity. Mg(2+) is required as a cofactor. Post-translationally, phosphorylated at Ser-203 by MAPK1/ERK2 under hypoxic conditions, which promotes its mitochondrial targeting. In terms of tissue distribution, mainly expressed in spermatogonia. Localized on the principle piece in the sperm (at protein level). Expression significantly decreased in the testis of elderly men.

It localises to the cytoplasm. The protein resides in the cytosol. The protein localises to the mitochondrion matrix. It catalyses the reaction (2R)-3-phosphoglycerate + ATP = (2R)-3-phospho-glyceroyl phosphate + ADP. It carries out the reaction L-seryl-[protein] + ATP = O-phospho-L-seryl-[protein] + ADP + H(+). It functions in the pathway carbohydrate degradation; glycolysis; pyruvate from D-glyceraldehyde 3-phosphate: step 2/5. Specifically inhibited by heterocyclic compound CBR-470-0. Catalyzes one of the two ATP producing reactions in the glycolytic pathway via the reversible conversion of 1,3-diphosphoglycerate to 3-phosphoglycerate. Both L- and D- forms of purine and pyrimidine nucleotides can be used as substrates, but the activity is much lower on pyrimidines. In addition to its role as a glycolytic enzyme, it seems that PGK1 acts as a polymerase alpha cofactor protein (primer recognition protein). Acts as a protein kinase when localized to the mitochondrion where it phosphorylates pyruvate dehydrogenase kinase PDK1 to inhibit pyruvate dehydrogenase complex activity and suppress the formation of acetyl-coenzyme A from pyruvate, and consequently inhibit oxidative phosphorylation and promote glycolysis. May play a role in sperm motility. The sequence is that of Phosphoglycerate kinase 1 (PGK1) from Homo sapiens (Human).